The following is a 418-amino-acid chain: MEVTQMTSPIHNYSEIGKLKTVLLKRPGREIENFTPDMMPRLLFDDIPYLPIAQKEHDYFADTLRDNGVEVLYLEKLSAEALDAGGEEVRNHFLEQMLTESGYAAGSIHDALKEYLGSMNNQDMVVKIMEGVRKNELDFVPKDLVSCAENQDYEFYMDPMPNLYFTRDPSACIGDGLSINHMTFVARQRESLFNETIIKYHPRFANKGIHVWRDRNHTTRIEGGDELVLNNHVMAIGVSQRTSADAIQDIAKNLFKDGQYDTVIAIKIPHNHAMMHLDTVFTMINYDQFTVHPGILGKGGQIDTWTITPGKNEGELNLQHDTDLKKVLKTALNLDDLDLIPTGNGDPIIAGREQWNDGSNTLAIAPGVVVTYNRNYVSNELLRKHGLKVLEVISSELSRGRGGPRCMSCPIVREDLKK.

The active-site Amidino-cysteine intermediate is C406.

It belongs to the arginine deiminase family.

The protein localises to the cytoplasm. It carries out the reaction L-arginine + H2O = L-citrulline + NH4(+). The protein operates within amino-acid degradation; L-arginine degradation via ADI pathway; carbamoyl phosphate from L-arginine: step 1/2. This chain is Arginine deiminase, found in Lentilactobacillus hilgardii (Lactobacillus hilgardii).